A 210-amino-acid polypeptide reads, in one-letter code: UPF0301 protein CPS_1252 (210 aa).

The protein belongs to the UPF0301 (AlgH) family.

In Colwellia psychrerythraea (strain 34H / ATCC BAA-681) (Vibrio psychroerythus), this protein is UPF0301 protein CPS_1252.